The sequence spans 824 residues: Probable acyl-CoA dehydrogenase IBR3 (824 aa).

Glycine 2 bears the N-acetylglycine mark. FAD is bound by residues 555–565, 589–591, arginine 706, glutamine 776, and 776–780; these read FAMTEPQVASS, WTS, and QVHGA. The Microbody targeting signal motif lies at 822 to 824; it reads SKL.

This sequence belongs to the acyl-CoA dehydrogenase family. The cofactor is FAD.

The protein resides in the peroxisome. It catalyses the reaction a 2,3-saturated acyl-CoA + A = a 2,3-dehydroacyl-CoA + AH2. Functionally, involved with IBR1 and IBR10 in the peroxisomal beta-oxidation of indole-3-butyric acid (IBA) to form indole-3-acetic acid (IAA), a biologically active auxin. May be responsible for catalyzing the first step in IBA-CoA beta-oxidation. May play a role in defense response to pathogenic bacteria. The protein is Probable acyl-CoA dehydrogenase IBR3 of Arabidopsis thaliana (Mouse-ear cress).